The primary structure comprises 499 residues: Pentatricopeptide repeat-containing protein PPR5, chloroplastic (499 aa).

Residues 1-12 (MLACPSTSSPWP) show a composition bias toward low complexity. The disordered stretch occupies residues 1 to 28 (MLACPSTSSPWPQRQPPSPCPGGGGGAT). A chloroplast-targeting transit peptide spans 1-45 (MLACPSTSSPWPQRQPPSPCPGGGGGATRHVALAARSKRRGAGPA). PPR repeat units lie at residues 123-157 (DNGIYSKLISVMGRKGQIRMAMWLFSQMRNSGCKP), 158-193 (DTSVYNSLIGAHLHSRDKTKALAKALGYFEKMKCIE), 198-232 (TIVTYNILLRAFAQAGDTKQVDMLFKDLDESVVSP), 233-267 (DVYTYNGVLDAYGKNGMIKEMESVLVRMKSTQCRP), 268-302 (DVITFNILIDSYGRKQTFDKMEQVFKSLLRSKERP), 303-337 (THPTFNSMITNYGRARLREKAESVVEKMEELGFKP), 338-372 (NYVTQECLIIMYAHCDCVSKARQVFDELVTSQTKV), 373-407 (HLSSLNSMLEAYCMNGLHTEADRLLDTALQQCVVP), and 408-442 (NGSTYKLLYKAYTKANDKLLVQKLLKRMNKQGIVP). The tract at residues 458–499 (DRKPRTSPGINSASKPSTDSAGDSETATSDKPEVSVWHVAAT) is disordered. Residues 465–484 (PGINSASKPSTDSAGDSETA) show a composition bias toward polar residues.

This sequence belongs to the PPR family. P subfamily.

The protein resides in the plastid. It is found in the chloroplast. In terms of biological role, involved in the biogenesis of the plastid translation machinery by promoting the splicing of group II introns in chloroplasts. Stabilizes the chloroplast trnG pre-RNA by directly binding to a group II intron, where it protects an endonuclease-sensitive site and stimulates splicing. Binds specific sites within group II intron trnG pre-RNA. Binds with high affinity to the 5'-UTR of the chloroplastic petA mRNA. In Zea mays (Maize), this protein is Pentatricopeptide repeat-containing protein PPR5, chloroplastic.